Reading from the N-terminus, the 335-residue chain is Cobalt-precorrin-5B C(1)-methyltransferase (335 aa).

It belongs to the CbiD family.

It catalyses the reaction Co-precorrin-5B + S-adenosyl-L-methionine = Co-precorrin-6A + S-adenosyl-L-homocysteine. It participates in cofactor biosynthesis; adenosylcobalamin biosynthesis; cob(II)yrinate a,c-diamide from sirohydrochlorin (anaerobic route): step 6/10. Its function is as follows. Catalyzes the methylation of C-1 in cobalt-precorrin-5B to form cobalt-precorrin-6A. This is Cobalt-precorrin-5B C(1)-methyltransferase from Methanospirillum hungatei JF-1 (strain ATCC 27890 / DSM 864 / NBRC 100397 / JF-1).